The sequence spans 129 residues: Large ribosomal subunit protein uL22 (129 aa).

The protein belongs to the universal ribosomal protein uL22 family. Part of the 50S ribosomal subunit.

This protein binds specifically to 23S rRNA; its binding is stimulated by other ribosomal proteins, e.g. L4, L17, and L20. It is important during the early stages of 50S assembly. It makes multiple contacts with different domains of the 23S rRNA in the assembled 50S subunit and ribosome. Its function is as follows. The globular domain of the protein is located near the polypeptide exit tunnel on the outside of the subunit, while an extended beta-hairpin is found that lines the wall of the exit tunnel in the center of the 70S ribosome. The protein is Large ribosomal subunit protein uL22 of Beijerinckia indica subsp. indica (strain ATCC 9039 / DSM 1715 / NCIMB 8712).